A 257-amino-acid polypeptide reads, in one-letter code: tRNA pseudouridine synthase A (257 aa).

The active-site Nucleophile is the aspartate 53. Tyrosine 111 is a binding site for substrate.

It belongs to the tRNA pseudouridine synthase TruA family. As to quaternary structure, homodimer.

The catalysed reaction is uridine(38/39/40) in tRNA = pseudouridine(38/39/40) in tRNA. Functionally, formation of pseudouridine at positions 38, 39 and 40 in the anticodon stem and loop of transfer RNAs. The chain is tRNA pseudouridine synthase A from Xylella fastidiosa (strain M12).